Reading from the N-terminus, the 1678-residue chain is Clathrin heavy chain (1678 aa).

WD40-like repeat regions lie at residues 24-67 (SFSF…RPIS), 68-107 (ADSA…MNED), 108-149 (VVFW…SSLN), 150-195 (GCQI…QAIE), 196-257 (GHAA…PEAQ), 258-301 (NDFP…ISAD), and 302-330 (TIFV…VTVD). 7 CHCR repeats span residues 538 to 684 (VAEE…QICV), 687 to 829 (ATKY…SEDI), 834 to 973 (ILVV…QLID), 980 to 1125 (LSET…VKEA), 1129 to 1270 (YIKA…FRLA), 1275 to 1421 (LHIV…LLLN), and 1424 to 1567 (LLVL…YDCF). Residues 1334 to 1643 (REHLELFWSR…IQMEPQLMIT (310 aa)) form an involved in binding clathrin light chain region. Residues 1552 to 1677 (EELLGWFLER…AGGRNMGYPY (126 aa)) are trimerization.

The protein belongs to the clathrin heavy chain family. As to quaternary structure, clathrin triskelions, composed of 3 heavy chains and 3 light chains, are the basic subunits of the clathrin coat. Interacts with sau.

Its subcellular location is the cytoplasmic vesicle membrane. It localises to the membrane. The protein localises to the coated pit. Clathrin is the major protein of the polyhedral coat of coated pits and vesicles. The polypeptide is Clathrin heavy chain (Chc) (Drosophila melanogaster (Fruit fly)).